The following is a 481-amino-acid chain: Argininosuccinate lyase (481 aa).

Residues 1 to 17 (MKNAPVDTQSDAATSFE) show a composition bias toward polar residues. The interval 1 to 25 (MKNAPVDTQSDAATSFEGTAANPQW) is disordered.

The protein belongs to the lyase 1 family. Argininosuccinate lyase subfamily.

It is found in the cytoplasm. The catalysed reaction is 2-(N(omega)-L-arginino)succinate = fumarate + L-arginine. Its pathway is amino-acid biosynthesis; L-arginine biosynthesis; L-arginine from L-ornithine and carbamoyl phosphate: step 3/3. The chain is Argininosuccinate lyase from Gluconobacter oxydans (strain 621H) (Gluconobacter suboxydans).